Consider the following 519-residue polypeptide: Signal transduction histidine-protein kinase/phosphatase MprB (519 aa).

Over 1 to 26 (MVRFAWRRRASLRATSSLSLRWRVML) the chain is Cytoplasmic. Residues 27 to 47 (LAMSMVAMVVVLMAFAVYVVI) form a helical membrane-spanning segment. The Extracellular segment spans residues 48 to 163 (SAALYSDIDN…PTEAVMTKLR (116 aa)). A helical transmembrane segment spans residues 164-184 (WVLLIVGSLGVAVAAVAGGMV). At 185–519 (TRAGLRPVGR…SVDYQSARAR (335 aa)) the chain is on the cytoplasmic side. The region spanning 186 to 238 (RAGLRPVGRLTEAAERVARTDDLRPIPVFGSDELARLTEAFNLMLRALAESRE) is the HAMP domain. The 221-residue stretch at 246-466 (DAGHELRTPL…SIYVLLPGRP (221 aa)) folds into the Histidine kinase domain. Histidine 249 carries the post-translational modification Phosphohistidine; by autocatalysis.

Mg(2+) is required as a cofactor. Requires Mn(2+) as cofactor. In terms of processing, autophosphorylated.

Its subcellular location is the cell membrane. It catalyses the reaction ATP + protein L-histidine = ADP + protein N-phospho-L-histidine.. Its function is as follows. Member of the two-component regulatory system MprB/MprA which contributes to maintaining a balance among several systems involved in stress resistance and is required for establishment and maintenance of persistent infection in the host. In response to environmental signals MprB acts both as a membrane-associated protein kinase that undergoes autophosphorylation and subsequently transfers the phosphate to MprA, and a protein phosphatase that dephosphorylates phospho-MprA. This chain is Signal transduction histidine-protein kinase/phosphatase MprB (mprB), found in Mycobacterium leprae (strain TN).